Here is a 256-residue protein sequence, read N- to C-terminus: Probable ABC transporter ATP-binding protein spyM18_0273 (256 aa).

The ABC transporter domain maps to 4-246; sequence LEINNLHVSI…EKEGYAGIAQ (243 aa). 36–43 lines the ATP pocket; the sequence is GPNGTGKS.

This sequence belongs to the ABC transporter superfamily. Ycf16 family.

It localises to the cell membrane. The protein is Probable ABC transporter ATP-binding protein spyM18_0273 of Streptococcus pyogenes serotype M18 (strain MGAS8232).